A 255-amino-acid polypeptide reads, in one-letter code: Complement C1q-like protein 3 (255 aa).

A signal peptide spans Met-1 to Ala-20. Positions Lys-39–Gly-109 are disordered. One can recognise a Collagen-like domain in the interval Gly-61 to Asn-111. Residues Arg-75–Pro-89 are compositionally biased toward pro residues. A C1q domain is found at Ser-122–Asp-255.

As to quaternary structure, forms homooligomers. Interacts with ADGRB3. Forms heterooligomers with C1QL2 and C1QL4, when proteins are coexpressed; this interaction does not occur after secretion. Highly expressed in brain and white adipose tissue. In gonadal fat pad, expressed at lower levels in adipocytes than in the stromal vascular fraction (VSP), which contains preadipocytes, fibroblasts, endothelial cells and occasional immune cells. Expression exhibits sexually dimorphism, with higher levels in females than in males (at protein level). Tends to be up-regulated in adipose tissue from obese males, but not females. Expressed in glial cells.

It localises to the secreted. May regulate the number of excitatory synapses that are formed on hippocampus neurons. Has no effect on inhibitory synapses. Plays a role in glucose homeostasis. Via AMPK signaling pathway, stimulates glucose uptake in adipocytes, myotubes and hepatocytes and enhances insulin-stimulated glucose uptake. In a hepatoma cell line, reduces the expression of gluconeogenic enzymes G6PC1 and PCK1 and hence decreases de novo glucose production. The polypeptide is Complement C1q-like protein 3 (C1ql3) (Mus musculus (Mouse)).